The chain runs to 226 residues: tRNA (guanine-N(1)-)-methyltransferase (226 aa).

S-adenosyl-L-methionine is bound by residues Gly110 and 129–134 (IGDYIL).

Belongs to the RNA methyltransferase TrmD family. In terms of assembly, homodimer.

The protein localises to the cytoplasm. The catalysed reaction is guanosine(37) in tRNA + S-adenosyl-L-methionine = N(1)-methylguanosine(37) in tRNA + S-adenosyl-L-homocysteine + H(+). Functionally, specifically methylates guanosine-37 in various tRNAs. This Malacoplasma penetrans (strain HF-2) (Mycoplasma penetrans) protein is tRNA (guanine-N(1)-)-methyltransferase.